The following is a 193-amino-acid chain: Putative RING finger protein ORF38 (193 aa).

The segment at Cys12–Arg50 adopts an RING-type zinc-finger fold.

The chain is Putative RING finger protein ORF38 from Magallana gigas (Pacific oyster).